Consider the following 1383-residue polypeptide: DNA-directed RNA polymerase subunit beta (1383 aa).

This sequence belongs to the RNA polymerase beta chain family. In terms of assembly, the RNAP catalytic core consists of 2 alpha, 1 beta, 1 beta' and 1 omega subunit. When a sigma factor is associated with the core the holoenzyme is formed, which can initiate transcription.

It carries out the reaction RNA(n) + a ribonucleoside 5'-triphosphate = RNA(n+1) + diphosphate. In terms of biological role, DNA-dependent RNA polymerase catalyzes the transcription of DNA into RNA using the four ribonucleoside triphosphates as substrates. The protein is DNA-directed RNA polymerase subunit beta of Xanthomonas oryzae pv. oryzae (strain MAFF 311018).